The chain runs to 58 residues: Large ribosomal subunit protein bL32 (58 aa).

Belongs to the bacterial ribosomal protein bL32 family.

This Anaplasma marginale (strain Florida) protein is Large ribosomal subunit protein bL32.